A 463-amino-acid chain; its full sequence is EPD1-interacting receptor-like cytoplasmic serine/threonine-protein kinase (463 aa).

The 293-residue stretch at 91-383 folds into the Protein kinase domain; the sequence is FSSANFLGKG…LTDIPIGPFV (293 aa). Residues 97-105 and Lys-126 each bind ATP; that span reads LGKGGFGPV. Residues Tyr-171 and Tyr-173 each carry the phosphotyrosine modification. Asp-221 acts as the Proton acceptor in catalysis.

It belongs to the protein kinase superfamily. Ser/Thr protein kinase family. In terms of assembly, interacts with the V.dahliae elicitor EPD1 (AC G2WWH6). Phosphorylated at Tyr-171 and Tyr-173 in the presence of pathogen-associated molecular patterns (PAMPs); this triggers the expression of pathogenesis-related genes.

Its subcellular location is the cell membrane. It carries out the reaction L-seryl-[protein] + ATP = O-phospho-L-seryl-[protein] + ADP + H(+). The enzyme catalyses L-threonyl-[protein] + ATP = O-phospho-L-threonyl-[protein] + ADP + H(+). Required for pathogen-associated molecular pattern (PAMP, e.g. chitin and flg22)-triggered immunity (PTI) involving reactive oxygen species (ROS) accumulation and triggering plant defense, including defense-related gene expression (e.g. PR1 and LOX). Ensures specific recognition of the EPD1 effector of Verticillium dahliae, resulting in a hypersensitive response known as effector-triggered immunity (ETI), characterized by the activation of programmed cell death to limit infection by the pathogen. Priming plants with the incompatible pathogen V.dahliae leads to an increased resistance to both the broad-host-range filamentous pathogen Botrytis cinerea and the semibiotrophic pathogen Phytophthora capsici, as a result of systemic acquired resistance (SAR). This chain is EPD1-interacting receptor-like cytoplasmic serine/threonine-protein kinase, found in Nicotiana benthamiana.